We begin with the raw amino-acid sequence, 251 residues long: Zinc import ATP-binding protein ZnuC (251 aa).

The region spanning V5–R220 is the ABC transporter domain. G37 to S44 is a binding site for ATP.

This sequence belongs to the ABC transporter superfamily. Zinc importer (TC 3.A.1.15.5) family. The complex is composed of two ATP-binding proteins (ZnuC), two transmembrane proteins (ZnuB) and a solute-binding protein (ZnuA).

Its subcellular location is the cell inner membrane. The enzyme catalyses Zn(2+)(out) + ATP(in) + H2O(in) = Zn(2+)(in) + ADP(in) + phosphate(in) + H(+)(in). Functionally, part of the ABC transporter complex ZnuABC involved in zinc import. Responsible for energy coupling to the transport system. The protein is Zinc import ATP-binding protein ZnuC of Salmonella choleraesuis (strain SC-B67).